The sequence spans 127 residues: Small ribosomal subunit protein uS11 (127 aa).

Belongs to the universal ribosomal protein uS11 family. In terms of assembly, part of the 30S ribosomal subunit. Interacts with proteins S7 and S18. Binds to IF-3.

Functionally, located on the platform of the 30S subunit, it bridges several disparate RNA helices of the 16S rRNA. Forms part of the Shine-Dalgarno cleft in the 70S ribosome. The polypeptide is Small ribosomal subunit protein uS11 (Streptococcus mutans serotype c (strain ATCC 700610 / UA159)).